The following is a 374-amino-acid chain: tRNA-specific 2-thiouridylase MnmA (374 aa).

ATP-binding positions include 12–19 (GMSGGVDS) and methionine 38. The segment at 98–100 (NPD) is interaction with target base in tRNA. Catalysis depends on cysteine 103, which acts as the Nucleophile. Cysteine 103 and cysteine 202 are joined by a disulfide. Glycine 128 is an ATP binding site. The tract at residues 152-154 (KDQ) is interaction with tRNA. Cysteine 202 (cysteine persulfide intermediate) is an active-site residue. The segment at 316–317 (RY) is interaction with tRNA.

This sequence belongs to the MnmA/TRMU family.

The protein resides in the cytoplasm. It catalyses the reaction S-sulfanyl-L-cysteinyl-[protein] + uridine(34) in tRNA + AH2 + ATP = 2-thiouridine(34) in tRNA + L-cysteinyl-[protein] + A + AMP + diphosphate + H(+). Functionally, catalyzes the 2-thiolation of uridine at the wobble position (U34) of tRNA, leading to the formation of s(2)U34. The sequence is that of tRNA-specific 2-thiouridylase MnmA from Vibrio vulnificus (strain CMCP6).